Here is a 974-residue protein sequence, read N- to C-terminus: Phosphoenolpyruvate carboxylase 1 (974 aa).

Residues His164 and Lys604 contribute to the active site.

It belongs to the PEPCase type 1 family. Exists as a homotetramer or heterooligomer. Mg(2+) serves as cofactor.

It localises to the cytoplasm. The enzyme catalyses oxaloacetate + phosphate = phosphoenolpyruvate + hydrogencarbonate. Activated by glutamine and dihydroxyacetone phosphate. Inhibited by glutamate, aspartate, 2-oxoglutarate and malate. Functionally, through the carboxylation of phosphoenolpyruvate (PEP) it forms oxaloacetate, a four-carbon dicarboxylic acid source for the tricarboxylic acid cycle. In Chlamydomonas reinhardtii (Chlamydomonas smithii), this protein is Phosphoenolpyruvate carboxylase 1.